The following is a 123-amino-acid chain: CD59A glycoprotein (123 aa).

Residues 1 to 23 (MRAQRGLILLLLLLAVFCSTAVS) form the signal peptide. The UPAR/Ly6 domain occupies 24-96 (LTCYHCFQPV…CCQFNLCNKS (73 aa)). Intrachain disulfides connect cysteine 26-cysteine 50, cysteine 29-cysteine 37, cysteine 43-cysteine 63, cysteine 69-cysteine 87, and cysteine 88-cysteine 93. N-linked (GlcNAc...) asparagine glycosylation occurs at asparagine 40. N-linked (GlcNAc...) asparagine glycosylation occurs at asparagine 94. A propeptide spans 97–123 (DGSLGKTPLLGTSVLVAILNLCFLSHL) (removed in mature form).

In terms of assembly, interacts with T-cell surface antigen CD2. N- and O-glycosylated. In terms of tissue distribution, expressed in all tissues examined (liver, kidney, spleen, thymus, brain and heart). Low levels in thymus. Also expressed in mononuclear cells, erythrocytes and platelets. Barely detected in neutrophils.

Its subcellular location is the cell membrane. The protein localises to the secreted. Potent inhibitor of the complement membrane attack complex (MAC) action, which protects self-cells from damage during complement activation. Acts by binding to the beta-haipins of C8 (C8A and C8B) components of the assembling MAC, forming an intermolecular beta-sheet that prevents incorporation of the multiple copies of C9 required for complete formation of the osmolytic pore. The sequence is that of CD59A glycoprotein from Mus musculus (Mouse).